We begin with the raw amino-acid sequence, 313 residues long: Homoserine kinase (313 aa).

92–102 (PPGRGLGSSGA) lines the ATP pocket.

It belongs to the GHMP kinase family. Homoserine kinase subfamily.

It localises to the cytoplasm. The enzyme catalyses L-homoserine + ATP = O-phospho-L-homoserine + ADP + H(+). Its pathway is amino-acid biosynthesis; L-threonine biosynthesis; L-threonine from L-aspartate: step 4/5. Functionally, catalyzes the ATP-dependent phosphorylation of L-homoserine to L-homoserine phosphate. The chain is Homoserine kinase from Aeropyrum pernix (strain ATCC 700893 / DSM 11879 / JCM 9820 / NBRC 100138 / K1).